Reading from the N-terminus, the 235-residue chain is Ubiquinone biosynthesis O-methyltransferase (235 aa).

S-adenosyl-L-methionine is bound by residues Arg-39, Gly-59, Asp-80, and Met-124.

The protein belongs to the methyltransferase superfamily. UbiG/COQ3 family.

It carries out the reaction a 3-demethylubiquinol + S-adenosyl-L-methionine = a ubiquinol + S-adenosyl-L-homocysteine + H(+). It catalyses the reaction a 3-(all-trans-polyprenyl)benzene-1,2-diol + S-adenosyl-L-methionine = a 2-methoxy-6-(all-trans-polyprenyl)phenol + S-adenosyl-L-homocysteine + H(+). The protein operates within cofactor biosynthesis; ubiquinone biosynthesis. Functionally, O-methyltransferase that catalyzes the 2 O-methylation steps in the ubiquinone biosynthetic pathway. The polypeptide is Ubiquinone biosynthesis O-methyltransferase (Vibrio parahaemolyticus serotype O3:K6 (strain RIMD 2210633)).